A 146-amino-acid chain; its full sequence is Anti-sigma F factor (146 aa).

Belongs to the anti-sigma-factor family.

It carries out the reaction L-seryl-[protein] + ATP = O-phospho-L-seryl-[protein] + ADP + H(+). The enzyme catalyses L-threonyl-[protein] + ATP = O-phospho-L-threonyl-[protein] + ADP + H(+). Functionally, binds to sigma F and blocks its ability to form an RNA polymerase holoenzyme (E-sigma F). Phosphorylates SpoIIAA on a serine residue. This phosphorylation may enable SpoIIAA to act as an anti-anti-sigma factor that counteracts SpoIIAB and thus releases sigma F from inhibition. The sequence is that of Anti-sigma F factor from Geobacillus stearothermophilus (Bacillus stearothermophilus).